Here is a 233-residue protein sequence, read N- to C-terminus: Orotidine 5'-phosphate decarboxylase (233 aa).

Residues Asp-11, Lys-34, 61-70, Thr-117, Arg-179, Gln-189, Gly-209, and Arg-210 each bind substrate; that span reads DLKLHDIPNT. The Proton donor role is filled by Lys-63.

The protein belongs to the OMP decarboxylase family. Type 1 subfamily. Homodimer.

It carries out the reaction orotidine 5'-phosphate + H(+) = UMP + CO2. It functions in the pathway pyrimidine metabolism; UMP biosynthesis via de novo pathway; UMP from orotate: step 2/2. Its function is as follows. Catalyzes the decarboxylation of orotidine 5'-monophosphate (OMP) to uridine 5'-monophosphate (UMP). In Streptococcus agalactiae serotype V (strain ATCC BAA-611 / 2603 V/R), this protein is Orotidine 5'-phosphate decarboxylase.